A 221-amino-acid polypeptide reads, in one-letter code: Immediate early response gene 2 protein (221 aa).

At methionine 1 the chain carries N-acetylmethionine. Residues 105 to 155 (ETPALCDPPPARVSRKRRSSSDLSDGSDAGLVPSKKARLEEVEGEATSEVP) form a disordered region. The span at 125-136 (SDLSDGSDAGLV) shows a compositional bias: low complexity.

Belongs to the IER family.

The protein resides in the cytoplasm. Its subcellular location is the nucleus. Functionally, DNA-binding protein that seems to act as a transcription factor. Involved in the regulation of neuronal differentiation, acts upon JNK-signaling pathway activation and plays a role in neurite outgrowth in hippocampal cells. May mediate with FIBP FGF-signaling in the establishment of laterality in the embryo. Promotes cell motility, seems to stimulate tumor metastasis. This is Immediate early response gene 2 protein (Ier2) from Mus musculus (Mouse).